Consider the following 302-residue polypeptide: Methionyl-tRNA formyltransferase (302 aa).

Position 108 to 111 (108 to 111 (SLLP)) interacts with (6S)-5,6,7,8-tetrahydrofolate. Residues 279 to 288 (KRPMEPEEFL) are compositionally biased toward basic and acidic residues. A disordered region spans residues 279–302 (KRPMEPEEFLRGFPLPEGSRAHTS).

Belongs to the Fmt family.

It catalyses the reaction L-methionyl-tRNA(fMet) + (6R)-10-formyltetrahydrofolate = N-formyl-L-methionyl-tRNA(fMet) + (6S)-5,6,7,8-tetrahydrofolate + H(+). In terms of biological role, attaches a formyl group to the free amino group of methionyl-tRNA(fMet). The formyl group appears to play a dual role in the initiator identity of N-formylmethionyl-tRNA by promoting its recognition by IF2 and preventing the misappropriation of this tRNA by the elongation apparatus. This Cereibacter sphaeroides (strain ATCC 17023 / DSM 158 / JCM 6121 / CCUG 31486 / LMG 2827 / NBRC 12203 / NCIMB 8253 / ATH 2.4.1.) (Rhodobacter sphaeroides) protein is Methionyl-tRNA formyltransferase.